The sequence spans 145 residues: Superoxide dismutase [Mn/Fe] (145 aa).

Fe(3+) contacts are provided by histidine 10 and histidine 64. Positions 10 and 64 each coordinate Mn(2+).

Belongs to the iron/manganese superoxide dismutase family. It depends on Mn(2+) as a cofactor. The cofactor is Fe(3+).

The enzyme catalyses 2 superoxide + 2 H(+) = H2O2 + O2. Its function is as follows. Destroys superoxide anion radicals which are normally produced within the cells and which are toxic to biological systems. Catalyzes the dismutation of superoxide anion radicals into O2 and H2O2 by successive reduction and oxidation of the transition metal ion at the active site. This is Superoxide dismutase [Mn/Fe] (sodA) from Streptococcus porcinus.